Reading from the N-terminus, the 566-residue chain is MDLHRAAFKMENSSYLPNPLASPALMVLASTAEASRDASIPCQQPRPFGVPVSVDKDVHIPFTNGSYTFASMYHRQGGVPGTFANRDFPPSLLHLHPQFAPPNLDCTPISMLNHSGVGAFRPFASTEDRESYQSAFTPAKRLKNCHDTESPHLRFSDADGKEYDFGTQLPSSSPGSLKVDDTGKKIFAVSGLISDREASSSPEDRNDRCKKKAAALFDSQAPICPICQVLLRPSELQEHMEQELEQLAQLPSSKNSLLKDAMAPGTPKSLLLSASIKREGESPTASPHSSATDDLHHSDRYQTFLRVRANRQTRLNARIGKMKRRKQDEGQREGSCMAEDDAVDIEHENNNRFEEYGWCGQKRIRATTLLEGGFRGSGFIMCSGKENPDSDADLDVDGDDTLEYGKPQYTEADVIPCTGEEPGEAKEREALRGAVLNGGPPSTRITPEFSKWANDEMPSTSNGESSKQEAMQKTCKNSDIEKITEDSAVTTFEALKARVRELERQLSRGDRYKCLICMDSYSMPLTSIQCWHVHCEECWLRTLGAKKLCPQCNTITAPGDLRRIYL.

K277 participates in a covalent cross-link: Glycyl lysine isopeptide (Lys-Gly) (interchain with G-Cter in SUMO2). Positions 277-297 (KREGESPTASPHSSATDDLHH) are disordered. A Phosphoserine modification is found at S390. Residues 485-513 (EDSAVTTFEALKARVRELERQLSRGDRYK) are a coiled coil. Positions 514-522 (CLICMDSYS) are required for targeting to the cytoplasm. Residues 514-553 (CLICMDSYSMPLTSIQCWHVHCEECWLRTLGAKKLCPQCN) form an RING-type zinc finger.

In terms of assembly, interacts with SIN3B. Interacts with CTNNB1 (via Armadillo repeats 2-8). Interacts with USP7 (via MATH domain). Post-translationally, auto-ubiquitinated; leads to proteasomal degradation.

Its subcellular location is the cytoplasm. It is found in the nucleus. The enzyme catalyses S-ubiquitinyl-[E2 ubiquitin-conjugating enzyme]-L-cysteine + [acceptor protein]-L-lysine = [E2 ubiquitin-conjugating enzyme]-L-cysteine + N(6)-ubiquitinyl-[acceptor protein]-L-lysine.. Its pathway is protein modification; protein ubiquitination. Functionally, E3 ubiquitin-protein ligase that promotes the ubiquitination and proteasomal degradation of SIN3B. Independently of its E3 ligase activity, acts as a CTNNB1 stabilizer through USP7-mediated deubiquitination of CTNNB1 and promotes Wnt signaling. Plays a critical role in the regulation of nuclear lamina. The chain is E3 ubiquitin-protein ligase RNF220 (RNF220) from Macaca fascicularis (Crab-eating macaque).